Consider the following 459-residue polypeptide: Cysteine--tRNA ligase (459 aa).

Cysteine 28 contacts Zn(2+). Residues 30 to 40 (VTVYDLCHIGH) carry the 'HIGH' region motif. Residues cysteine 209, histidine 234, and glutamate 238 each contribute to the Zn(2+) site. The 'KMSKS' region motif lies at 266–270 (KMSKS). Lysine 269 provides a ligand contact to ATP.

The protein belongs to the class-I aminoacyl-tRNA synthetase family. In terms of assembly, monomer. The cofactor is Zn(2+).

The protein resides in the cytoplasm. It catalyses the reaction tRNA(Cys) + L-cysteine + ATP = L-cysteinyl-tRNA(Cys) + AMP + diphosphate. In Haemophilus influenzae (strain ATCC 51907 / DSM 11121 / KW20 / Rd), this protein is Cysteine--tRNA ligase (cysS).